A 310-amino-acid chain; its full sequence is E3 ubiquitin-protein ligase CSU1 (310 aa).

Residues 43–67 form an RING-type 1; degenerate zinc finger; that stretch reads CSLCLKPFIDPMCCHKGHVFCRECI. The stretch at 75–95 forms a coiled coil; sequence KKDIQRRLAAHSSQKKQDKDE. The segment at 110–138 is disordered; it reads EFDQQNHSAMPRNSDKNHNEDKNGFHGAN. A compositionally biased stretch (basic and acidic residues) spans 122–133; it reads NSDKNHNEDKNG. The RING-type 2 zinc finger occupies 221–263; sequence CPSCKVTLTNTMSLVALSSCGHVFCKKCAEKFMPVDKVCLVCD.

It belongs to the NOSIP family.

Its subcellular location is the nucleus. It is found in the nucleus speckle. It carries out the reaction S-ubiquitinyl-[E2 ubiquitin-conjugating enzyme]-L-cysteine + [acceptor protein]-L-lysine = [E2 ubiquitin-conjugating enzyme]-L-cysteine + N(6)-ubiquitinyl-[acceptor protein]-L-lysine.. Its pathway is protein modification; protein ubiquitination. Functionally, RING-finger E3 ubiquitin-protein ligase that plays an major role in maintaining COP1 homeostasis in darkness. Negatively regulates COP1 protein accumulation by targeting COP1 for ubiquitination and subsequent proteasomal degradation in dark-grown seedlings. Negatively regulates the accumulation of SPA1 protein in the dark. The polypeptide is E3 ubiquitin-protein ligase CSU1 (Arabidopsis thaliana (Mouse-ear cress)).